We begin with the raw amino-acid sequence, 514 residues long: ATP synthase subunit alpha (514 aa).

170–177 (GDRQIGKT) is an ATP binding site.

Belongs to the ATPase alpha/beta chains family. In terms of assembly, F-type ATPases have 2 components, CF(1) - the catalytic core - and CF(0) - the membrane proton channel. CF(1) has five subunits: alpha(3), beta(3), gamma(1), delta(1), epsilon(1). CF(0) has three main subunits: a(1), b(2) and c(9-12). The alpha and beta chains form an alternating ring which encloses part of the gamma chain. CF(1) is attached to CF(0) by a central stalk formed by the gamma and epsilon chains, while a peripheral stalk is formed by the delta and b chains.

It localises to the cell inner membrane. The enzyme catalyses ATP + H2O + 4 H(+)(in) = ADP + phosphate + 5 H(+)(out). In terms of biological role, produces ATP from ADP in the presence of a proton gradient across the membrane. The alpha chain is a regulatory subunit. The chain is ATP synthase subunit alpha from Pseudomonas fluorescens (strain SBW25).